The primary structure comprises 363 residues: Probable endopolygalacturonase A (363 aa).

Residues 1-20 form the signal peptide; sequence MQLLQSSVIAATVGAALVAA. A propeptide spanning residues 21–28 is cleaved from the precursor; sequence APVELEAR. A disulfide bridge connects residues Cys-31 and Cys-46. PbH1 repeat units follow at residues 158-187, 188-209, 210-230, 239-260, 268-290, and 302-347; these read SDNLNITDVTIDNSAGTAEGHNTDAFDIGS, STYINIDGATVYNQDDCLAINS, GSHITFTNGYCDGGHGLSIGS, VEDVTISNSKVVNSQNGVRIKT, VSNVKFEDITLSGITKYGLVVEQ, and TNGI…SITG. N-linked (GlcNAc...) asparagine glycosylation is present at Asn-162. Asp-202 acts as the Proton donor in catalysis. A disulfide bridge connects residues Cys-204 and Cys-220. The active site involves His-224. Disulfide bonds link Cys-330-Cys-335 and Cys-354-Cys-363.

This sequence belongs to the glycosyl hydrolase 28 family.

The protein localises to the secreted. It catalyses the reaction (1,4-alpha-D-galacturonosyl)n+m + H2O = (1,4-alpha-D-galacturonosyl)n + (1,4-alpha-D-galacturonosyl)m.. Functionally, involved in maceration and soft-rotting of plant tissue. Hydrolyzes the 1,4-alpha glycosidic bonds of de-esterified pectate in the smooth region of the plant cell wall. In Aspergillus parasiticus, this protein is Probable endopolygalacturonase A (pgaA).